Consider the following 330-residue polypeptide: Ketol-acid reductoisomerase (NADP(+)) (330 aa).

A KARI N-terminal Rossmann domain is found at 1-181 (MKVFYDSDFK…GLSRAGVIQT (181 aa)). Residues 24 to 27 (YGSQ), R47, S52, and 82 to 85 (DELQ) each bind NADP(+). H107 is a catalytic residue. G133 contacts NADP(+). Residues 182-327 (TFKEETETDL…AKLRKMCGLE (146 aa)) form the KARI C-terminal knotted domain. D190, E194, E226, and E230 together coordinate Mg(2+). S251 contacts substrate.

Belongs to the ketol-acid reductoisomerase family. The cofactor is Mg(2+).

It carries out the reaction (2R)-2,3-dihydroxy-3-methylbutanoate + NADP(+) = (2S)-2-acetolactate + NADPH + H(+). It catalyses the reaction (2R,3R)-2,3-dihydroxy-3-methylpentanoate + NADP(+) = (S)-2-ethyl-2-hydroxy-3-oxobutanoate + NADPH + H(+). It participates in amino-acid biosynthesis; L-isoleucine biosynthesis; L-isoleucine from 2-oxobutanoate: step 2/4. It functions in the pathway amino-acid biosynthesis; L-valine biosynthesis; L-valine from pyruvate: step 2/4. Functionally, involved in the biosynthesis of branched-chain amino acids (BCAA). Catalyzes an alkyl-migration followed by a ketol-acid reduction of (S)-2-acetolactate (S2AL) to yield (R)-2,3-dihydroxy-isovalerate. In the isomerase reaction, S2AL is rearranged via a Mg-dependent methyl migration to produce 3-hydroxy-3-methyl-2-ketobutyrate (HMKB). In the reductase reaction, this 2-ketoacid undergoes a metal-dependent reduction by NADPH to yield (R)-2,3-dihydroxy-isovalerate. This chain is Ketol-acid reductoisomerase (NADP(+)), found in Methanococcus maripaludis (strain DSM 14266 / JCM 13030 / NBRC 101832 / S2 / LL).